The chain runs to 223 residues: Shematrin-like protein 2 (223 aa).

An N-terminal signal peptide occupies residues Met1–Cys19.

Prismatic layer of shell (at protein level).

Its subcellular location is the secreted. The chain is Shematrin-like protein 2 from Margaritifera margaritifera (Freshwater pearl mussel).